Consider the following 160-residue polypeptide: GPI-anchored protein LLG3 (160 aa).

A signal peptide spans 1 to 23 (MKITHHCLVSLLSILLLSGFAFS). N56 carries an N-linked (GlcNAc...) asparagine glycan. A lipid anchor (GPI-anchor amidated serine) is attached at S137. A propeptide spans 138–160 (HASIPLVSTHVLLITVSILFHLF) (removed in mature form).

As to expression, expressed in pollen, pollen tubes, sporophytic pistil tissues, in the early stages of female gametophyte development, and in unfertilized, mature ovules.

The protein resides in the cell membrane. The sequence is that of GPI-anchored protein LLG3 from Arabidopsis thaliana (Mouse-ear cress).